A 371-amino-acid chain; its full sequence is Probable dual-specificity RNA methyltransferase RlmN (371 aa).

Residue glutamate 114 is the Proton acceptor of the active site. The Radical SAM core domain occupies aspartate 120 to arginine 346. A disulfide bridge connects residues cysteine 127 and cysteine 357. Cysteine 134, cysteine 138, and cysteine 141 together coordinate [4Fe-4S] cluster. Residues glycine 183 to glutamate 184, serine 215, serine 238 to histidine 240, and asparagine 314 each bind S-adenosyl-L-methionine. Cysteine 357 serves as the catalytic S-methylcysteine intermediate.

This sequence belongs to the radical SAM superfamily. RlmN family. [4Fe-4S] cluster serves as cofactor.

The protein localises to the cytoplasm. The enzyme catalyses adenosine(2503) in 23S rRNA + 2 reduced [2Fe-2S]-[ferredoxin] + 2 S-adenosyl-L-methionine = 2-methyladenosine(2503) in 23S rRNA + 5'-deoxyadenosine + L-methionine + 2 oxidized [2Fe-2S]-[ferredoxin] + S-adenosyl-L-homocysteine. It carries out the reaction adenosine(37) in tRNA + 2 reduced [2Fe-2S]-[ferredoxin] + 2 S-adenosyl-L-methionine = 2-methyladenosine(37) in tRNA + 5'-deoxyadenosine + L-methionine + 2 oxidized [2Fe-2S]-[ferredoxin] + S-adenosyl-L-homocysteine. In terms of biological role, specifically methylates position 2 of adenine 2503 in 23S rRNA and position 2 of adenine 37 in tRNAs. The protein is Probable dual-specificity RNA methyltransferase RlmN of Rhodopirellula baltica (strain DSM 10527 / NCIMB 13988 / SH1).